The primary structure comprises 412 residues: Peptidase T (412 aa).

Position 78 (histidine 78) interacts with Zn(2+). Aspartate 80 is an active-site residue. Residue aspartate 140 participates in Zn(2+) binding. Residue glutamate 174 is the Proton acceptor of the active site. Zn(2+) contacts are provided by glutamate 175, aspartate 197, and histidine 379.

It belongs to the peptidase M20B family. It depends on Zn(2+) as a cofactor.

The protein localises to the cytoplasm. The catalysed reaction is Release of the N-terminal residue from a tripeptide.. In terms of biological role, cleaves the N-terminal amino acid of tripeptides. This Staphylococcus epidermidis (strain ATCC 12228 / FDA PCI 1200) protein is Peptidase T.